The following is a 611-amino-acid chain: Elongation factor 4 1 (611 aa).

The region spanning 11-193 (QHIRNFSIVA…QIVHKIPAPQ (183 aa)) is the tr-type G domain. Residues 23–28 (DHGKST) and 140–143 (NKID) contribute to the GTP site.

The protein belongs to the TRAFAC class translation factor GTPase superfamily. Classic translation factor GTPase family. LepA subfamily.

The protein localises to the cell membrane. It catalyses the reaction GTP + H2O = GDP + phosphate + H(+). In terms of biological role, required for accurate and efficient protein synthesis under certain stress conditions. May act as a fidelity factor of the translation reaction, by catalyzing a one-codon backward translocation of tRNAs on improperly translocated ribosomes. Back-translocation proceeds from a post-translocation (POST) complex to a pre-translocation (PRE) complex, thus giving elongation factor G a second chance to translocate the tRNAs correctly. Binds to ribosomes in a GTP-dependent manner. The polypeptide is Elongation factor 4 1 (Lactiplantibacillus plantarum (strain ATCC BAA-793 / NCIMB 8826 / WCFS1) (Lactobacillus plantarum)).